A 327-amino-acid chain; its full sequence is MEIKLIILSLALLLDRFVGDPPQLWQKVPHPVVLFGKAISWGEKRWNNRNLSASVLRRNGMWLTIGLVMACVVLGLVLELSLPFAGTAGAVAEILIVTVLLAQKSLADHVQAVALALREEGIEGGRRAVSMIVGRNPEHLDEGGVSRAAIESLAENASDGIVAPAFWFLVGGLPGLFAYKLINTADSMIGHLNDRYRDFGRFAAKLDDVANYIPARLTGLLASLATAITKDRLSGKEAFSVMRRDARLHRSPNAGWPESAFAGGLGLALAGPRQYGAEKVEGPMLNASGKRDANADDIDAALHLFWSTMSLMTGLVIAASLIGLLVG.

Helical transmembrane passes span 60 to 80, 82 to 102, 159 to 179, and 304 to 324; these read GMWL…VLEL, LPFA…VLLA, DGIV…LFAY, and LFWS…LIGL.

This sequence belongs to the CobD/CbiB family.

It is found in the cell membrane. It participates in cofactor biosynthesis; adenosylcobalamin biosynthesis. In terms of biological role, converts cobyric acid to cobinamide by the addition of aminopropanol on the F carboxylic group. The protein is Cobalamin biosynthesis protein CobD of Brucella anthropi (strain ATCC 49188 / DSM 6882 / CCUG 24695 / JCM 21032 / LMG 3331 / NBRC 15819 / NCTC 12168 / Alc 37) (Ochrobactrum anthropi).